The following is a 414-amino-acid chain: Eukaryotic initiation factor 4A (414 aa).

Residues 41 to 69 (ESFDDMGLQENLLRGIYAYGFEKPSAIQQ) carry the Q motif motif. The Helicase ATP-binding domain occupies 72–242 (IVPFCKGLDV…RKFMNKPVRI (171 aa)). ATP is bound at residue 85 to 92 (AQSGTGKT). The short motif at 190–193 (DEAD) is the DEAD box element. One can recognise a Helicase C-terminal domain in the interval 253-414 (GIKQFYVNVE…ELPANVADLL (162 aa)).

Belongs to the DEAD box helicase family. eIF4A subfamily. As to quaternary structure, eIF4F is a multi-subunit complex, the composition of which varies with external and internal environmental conditions. It is composed of at least EIF4A, EIF4E and EIF4G.

It catalyses the reaction ATP + H2O = ADP + phosphate + H(+). ATP-dependent RNA helicase which is a subunit of the eIF4F complex involved in cap recognition and is required for mRNA binding to ribosome. In the current model of translation initiation, eIF4A unwinds RNA secondary structures in the 5'-UTR of mRNAs which is necessary to allow efficient binding of the small ribosomal subunit, and subsequent scanning for the initiator codon. The chain is Eukaryotic initiation factor 4A from Triticum aestivum (Wheat).